The following is a 91-amino-acid chain: Sec-independent protein translocase protein TatA (91 aa).

The helical transmembrane segment at 3–23 (FFGIGLPEMLVILAIALLVFG) threads the bilayer. A disordered region spans residues 57–91 (DRTPATPAEATVEPPVLDSAPTEAVTVEKQTETQV). Positions 59-72 (TPATPAEATVEPPV) are enriched in low complexity.

This sequence belongs to the TatA/E family. As to quaternary structure, forms a complex with TatC.

It is found in the cell inner membrane. Functionally, part of the twin-arginine translocation (Tat) system that transports large folded proteins containing a characteristic twin-arginine motif in their signal peptide across membranes. TatA could form the protein-conducting channel of the Tat system. This chain is Sec-independent protein translocase protein TatA, found in Synechococcus elongatus (strain ATCC 33912 / PCC 7942 / FACHB-805) (Anacystis nidulans R2).